A 1408-amino-acid chain; its full sequence is DNA-directed RNA polymerase subunit beta'' (1408 aa).

It belongs to the RNA polymerase beta' chain family. RpoC2 subfamily. In terms of assembly, in plastids the minimal PEP RNA polymerase catalytic core is composed of four subunits: alpha, beta, beta', and beta''. When a (nuclear-encoded) sigma factor is associated with the core the holoenzyme is formed, which can initiate transcription.

Its subcellular location is the plastid. It is found in the chloroplast. It carries out the reaction RNA(n) + a ribonucleoside 5'-triphosphate = RNA(n+1) + diphosphate. DNA-dependent RNA polymerase catalyzes the transcription of DNA into RNA using the four ribonucleoside triphosphates as substrates. The sequence is that of DNA-directed RNA polymerase subunit beta'' from Psilotum nudum (Whisk fern).